Reading from the N-terminus, the 29-residue chain is Orphan peptide CllNtx (29 aa).

Contains 3 disulfide bonds. Expressed by the venom gland.

It localises to the secreted. Functionally, may act as a toxin. In Centruroides limpidus (Mexican scorpion), this protein is Orphan peptide CllNtx.